Here is a 599-residue protein sequence, read N- to C-terminus: Sulfite reductase [NADPH] flavoprotein alpha-component (599 aa).

Residues 64 to 202 enclose the Flavodoxin-like domain; it reads VTLISASQTG…AASEWRARVV (139 aa). Residues 70 to 75, 117 to 120, and 153 to 162 each bind FMN; these read SQTGNA, STQG, and LGDTSYEFFC. The 215-residue stretch at 234-448 folds into the FAD-binding FR-type domain; the sequence is DAPLAATLSV…IEHNDNFRLP (215 aa). FAD-binding positions include Thr-322, Ala-356, 386–389, 404–406, Tyr-410, and 419–422; these read RLYS, TVG, and GGAS. NADP(+) is bound by residues 519–520, 525–529, and Asp-561; these read SR and KIYVQ. An FAD-binding site is contributed by Tyr-599.

This sequence belongs to the NADPH-dependent sulphite reductase flavoprotein subunit CysJ family. The protein in the N-terminal section; belongs to the flavodoxin family. In the C-terminal section; belongs to the flavoprotein pyridine nucleotide cytochrome reductase family. As to quaternary structure, alpha(8)-beta(8). The alpha component is a flavoprotein, the beta component is a hemoprotein. It depends on FAD as a cofactor. FMN is required as a cofactor.

It catalyses the reaction hydrogen sulfide + 3 NADP(+) + 3 H2O = sulfite + 3 NADPH + 4 H(+). It functions in the pathway sulfur metabolism; hydrogen sulfide biosynthesis; hydrogen sulfide from sulfite (NADPH route): step 1/1. Component of the sulfite reductase complex that catalyzes the 6-electron reduction of sulfite to sulfide. This is one of several activities required for the biosynthesis of L-cysteine from sulfate. The flavoprotein component catalyzes the electron flow from NADPH -&gt; FAD -&gt; FMN to the hemoprotein component. This Salmonella paratyphi B (strain ATCC BAA-1250 / SPB7) protein is Sulfite reductase [NADPH] flavoprotein alpha-component.